A 624-amino-acid polypeptide reads, in one-letter code: MKSARPKSVAPKSGQALLTLGALGVVFGDIGTSPLYSLHTAFSMQHNKVEVTQENVYGIISMVLWTITLIVTVKYVMLVTRADNQGQGGILALVALLKNRGHWGKFVAVAGMLGAALFYGDVVITPAISVLSATEGLTVISPSFERFILPVSLAVLIAIFAIQPLGTEKVGKAFGPIMLLWFVTLAGLGIPQIIGHPEILQSLSPHWALRLIVAEPFQAFVLLGAVVLTVTGAEALYADMGHFGARPIRVAWFCVVMPALILTYLGQGALVINQPEAVRNPMFYLAPEGLRIPLVILATIATVIASQAVISGAYSLTKQAVNLKLLPRMVIRHTSRKEEGQIYMPLVNGLLFVSVMVVVLVFRSSESLASAYGLAVTGTLVLVSVLYLIYVHTTWWKTALFIVLIGIPEVLLFASNTTKIHDGGWLPLLIAAVLIVVMRTWEWGSDRVNQERAELELPMDKFLEKLDQPHNIGLRKVAEVAVFPHGTSDTVPLSLVRCVKDLKLLYREIVIVRIVQEHVPHVPPEERAEMEVLHHAPIRVVRVDLHLGYFDEQNLPEHLHAIDPTWDNATYFLSALTLRSRLPGKIAGWRDRLYLSMERNQASRTESFKLQPSKTITVGTELHL.

Helical transmembrane passes span 16-36 (ALLT…SPLY), 59-79 (IISM…VMLV), 106-126 (FVAV…VITP), 147-167 (FILP…PLGT), 174-194 (FGPI…PQII), 211-231 (LIVA…LTVT), 252-272 (WFCV…ALVI), 292-312 (IPLV…VISG), 342-362 (IYMP…VLVF), 371-391 (AYGL…LIYV), 394-414 (TWWK…LLFA), and 418-438 (TKIH…IVVM).

It belongs to the HAK/KUP transporter (TC 2.A.72) family.

It is found in the cell membrane. It carries out the reaction K(+)(in) + H(+)(in) = K(+)(out) + H(+)(out). Functionally, transport of potassium into the cell. Likely operates as a K(+):H(+) symporter. This is Probable potassium transport system protein Kup from Corynebacterium glutamicum (strain ATCC 13032 / DSM 20300 / JCM 1318 / BCRC 11384 / CCUG 27702 / LMG 3730 / NBRC 12168 / NCIMB 10025 / NRRL B-2784 / 534).